The primary structure comprises 661 residues: UvrABC system protein B (661 aa).

One can recognise a Helicase ATP-binding domain in the interval 25-414 (AGLNSKKRSQ…DTVVELIIRP (390 aa)). Position 38–45 (38–45 (GITGSGKT)) interacts with ATP. Residues 91-114 (YYDYYQPEAYIARTDTFIEKDSSI) carry the Beta-hairpin motif. Positions 430 to 592 (QVEDLIGEIQ…IIPKTINRAI (163 aa)) constitute a Helicase C-terminal domain. Positions 621-656 (KAHIEKLKKDMLKAASNLEFEQAAKLRDQLKTLEEA) constitute a UVR domain.

Belongs to the UvrB family. As to quaternary structure, forms a heterotetramer with UvrA during the search for lesions. Interacts with UvrC in an incision complex.

The protein localises to the cytoplasm. The UvrABC repair system catalyzes the recognition and processing of DNA lesions. A damage recognition complex composed of 2 UvrA and 2 UvrB subunits scans DNA for abnormalities. Upon binding of the UvrA(2)B(2) complex to a putative damaged site, the DNA wraps around one UvrB monomer. DNA wrap is dependent on ATP binding by UvrB and probably causes local melting of the DNA helix, facilitating insertion of UvrB beta-hairpin between the DNA strands. Then UvrB probes one DNA strand for the presence of a lesion. If a lesion is found the UvrA subunits dissociate and the UvrB-DNA preincision complex is formed. This complex is subsequently bound by UvrC and the second UvrB is released. If no lesion is found, the DNA wraps around the other UvrB subunit that will check the other stand for damage. The chain is UvrABC system protein B from Rickettsia felis (strain ATCC VR-1525 / URRWXCal2) (Rickettsia azadi).